A 465-amino-acid polypeptide reads, in one-letter code: Cysteine--tRNA ligase (465 aa).

A Zn(2+)-binding site is contributed by Cys27. A 'HIGH' region motif is present at residues Pro29–His39. Zn(2+)-binding residues include Cys207, His237, and Glu241. The 'KMSKS' region motif lies at Lys269–Ser273. Residue Lys272 participates in ATP binding.

It belongs to the class-I aminoacyl-tRNA synthetase family. In terms of assembly, monomer. Zn(2+) is required as a cofactor.

It is found in the cytoplasm. The catalysed reaction is tRNA(Cys) + L-cysteine + ATP = L-cysteinyl-tRNA(Cys) + AMP + diphosphate. This chain is Cysteine--tRNA ligase, found in Helicobacter pylori (strain P12).